The primary structure comprises 255 residues: Cyclic di-GMP phosphodiesterase PdeH (255 aa).

The EAL domain occupies 13 to 255 (EASIESLQER…ETLNTAVLAL (243 aa)).

It carries out the reaction 3',3'-c-di-GMP + H2O = 5'-phosphoguanylyl(3'-&gt;5')guanosine + H(+). Functionally, involved in the control of the switch from cell motility to adhesion via regulation of cellular levels of cyclic-di-GMP (c-di-GMP). Part of a signaling cascade that regulates curli biosynthesis. The cascade is composed of two c-di-GMP control modules, in which c-di-GMP controlled by the DgcE/PdeH pair (module I) regulates the activity of the DgcM/PdeR pair (module II), which in turn regulates activity of the transcription factor MlrA and expression of the master biofilm regulator csgD. Effect on flagella is controlled via the c-di-GMP-binding flagellar brake protein YcgR. This is Cyclic di-GMP phosphodiesterase PdeH from Escherichia coli (strain K12).